The sequence spans 207 residues: Vexin (207 aa).

The segment at 55-102 (LELLPHRGDRRDPGDGRRFGRLQTARPPTAHPAKASARPVGISEPKTS) is disordered. Basic and acidic residues predominate over residues 58–72 (LPHRGDRRDPGDGRR).

Belongs to the vexin family.

It localises to the cell membrane. Its subcellular location is the nucleus. Required for neurogenesis in the neural plate and retina. Strongly cooperates with neural bHLH factors to promote neurogenesis. The protein is Vexin of Pongo abelii (Sumatran orangutan).